A 469-amino-acid chain; its full sequence is Glutamate--tRNA ligase (469 aa).

The short motif at 11–21 (PSPTGFIHLGN) is the 'HIGH' region element. Residues 121–131 (PRYDGTWRPEP) show a composition bias toward basic and acidic residues. The segment at 121 to 141 (PRYDGTWRPEPGKVLPEPPPG) is disordered. The 'KMSKS' region motif lies at 243-247 (KMSKR). Lys246 contributes to the ATP binding site.

The protein belongs to the class-I aminoacyl-tRNA synthetase family. Glutamate--tRNA ligase type 1 subfamily. As to quaternary structure, monomer.

It localises to the cytoplasm. The catalysed reaction is tRNA(Glu) + L-glutamate + ATP = L-glutamyl-tRNA(Glu) + AMP + diphosphate. Its function is as follows. Catalyzes the attachment of glutamate to tRNA(Glu) in a two-step reaction: glutamate is first activated by ATP to form Glu-AMP and then transferred to the acceptor end of tRNA(Glu). This Burkholderia multivorans (strain ATCC 17616 / 249) protein is Glutamate--tRNA ligase.